A 274-amino-acid chain; its full sequence is Diaminopimelate epimerase (274 aa).

Positions 11 and 60 each coordinate substrate. Cysteine 69 acts as the Proton donor in catalysis. Residues 70–71 (GN), asparagine 191, and 209–210 (ER) each bind substrate. Catalysis depends on cysteine 218, which acts as the Proton acceptor. Residue 219-220 (GS) coordinates substrate.

This sequence belongs to the diaminopimelate epimerase family. As to quaternary structure, homodimer.

The protein localises to the cytoplasm. The enzyme catalyses (2S,6S)-2,6-diaminopimelate = meso-2,6-diaminopimelate. The protein operates within amino-acid biosynthesis; L-lysine biosynthesis via DAP pathway; DL-2,6-diaminopimelate from LL-2,6-diaminopimelate: step 1/1. Its function is as follows. Catalyzes the stereoinversion of LL-2,6-diaminopimelate (L,L-DAP) to meso-diaminopimelate (meso-DAP), a precursor of L-lysine and an essential component of the bacterial peptidoglycan. The polypeptide is Diaminopimelate epimerase (Caldanaerobacter subterraneus subsp. tengcongensis (strain DSM 15242 / JCM 11007 / NBRC 100824 / MB4) (Thermoanaerobacter tengcongensis)).